Consider the following 103-residue polypeptide: Small ribosomal subunit protein uS10 (103 aa).

It belongs to the universal ribosomal protein uS10 family. As to quaternary structure, part of the 30S ribosomal subunit.

Involved in the binding of tRNA to the ribosomes. The polypeptide is Small ribosomal subunit protein uS10 (Xylella fastidiosa (strain M12)).